Here is a 1407-residue protein sequence, read N- to C-terminus: DNA-directed RNA polymerase subunit beta' (1407 aa).

Residues Cys70, Cys72, Cys85, and Cys88 each contribute to the Zn(2+) site. Residues Asp460, Asp462, and Asp464 each coordinate Mg(2+). An N6-acetyllysine modification is found at Lys972.

It belongs to the RNA polymerase beta' chain family. The RNAP catalytic core consists of 2 alpha, 1 beta, 1 beta' and 1 omega subunit. When a sigma factor is associated with the core the holoenzyme is formed, which can initiate transcription. Requires Mg(2+) as cofactor. It depends on Zn(2+) as a cofactor.

It catalyses the reaction RNA(n) + a ribonucleoside 5'-triphosphate = RNA(n+1) + diphosphate. Functionally, DNA-dependent RNA polymerase catalyzes the transcription of DNA into RNA using the four ribonucleoside triphosphates as substrates. This chain is DNA-directed RNA polymerase subunit beta', found in Escherichia coli O6:K15:H31 (strain 536 / UPEC).